The primary structure comprises 346 residues: Phosphoribosylformylglycinamidine cyclo-ligase (346 aa).

Belongs to the AIR synthase family.

Its subcellular location is the cytoplasm. The enzyme catalyses 2-formamido-N(1)-(5-O-phospho-beta-D-ribosyl)acetamidine + ATP = 5-amino-1-(5-phospho-beta-D-ribosyl)imidazole + ADP + phosphate + H(+). Its pathway is purine metabolism; IMP biosynthesis via de novo pathway; 5-amino-1-(5-phospho-D-ribosyl)imidazole from N(2)-formyl-N(1)-(5-phospho-D-ribosyl)glycinamide: step 2/2. This is Phosphoribosylformylglycinamidine cyclo-ligase from Vibrio atlanticus (strain LGP32) (Vibrio splendidus (strain Mel32)).